A 459-amino-acid chain; its full sequence is Bifunctional protein GlmU (459 aa).

The interval 1–230 (MSNRFAVILA…FDETLGVNDR (230 aa)) is pyrophosphorylase. Residues 9–12 (LAAG), lysine 23, glutamine 73, and 78–79 (GT) contribute to the UDP-N-acetyl-alpha-D-glucosamine site. Aspartate 103 serves as a coordination point for Mg(2+). Positions 140, 155, 170, and 228 each coordinate UDP-N-acetyl-alpha-D-glucosamine. Asparagine 228 lines the Mg(2+) pocket. The interval 231–251 (VALSQAEIIMKNRINRKNMVN) is linker. The N-acetyltransferase stretch occupies residues 252-459 (GVTIIDPSNT…VDQLLNKKKS (208 aa)). Residues arginine 333 and lysine 351 each coordinate UDP-N-acetyl-alpha-D-glucosamine. Histidine 363 acts as the Proton acceptor in catalysis. UDP-N-acetyl-alpha-D-glucosamine-binding residues include tyrosine 366 and asparagine 377. Acetyl-CoA is bound by residues 386 to 387 (NY), alanine 423, and arginine 440.

This sequence in the N-terminal section; belongs to the N-acetylglucosamine-1-phosphate uridyltransferase family. In the C-terminal section; belongs to the transferase hexapeptide repeat family. As to quaternary structure, homotrimer. Mg(2+) serves as cofactor.

The protein localises to the cytoplasm. It catalyses the reaction alpha-D-glucosamine 1-phosphate + acetyl-CoA = N-acetyl-alpha-D-glucosamine 1-phosphate + CoA + H(+). The catalysed reaction is N-acetyl-alpha-D-glucosamine 1-phosphate + UTP + H(+) = UDP-N-acetyl-alpha-D-glucosamine + diphosphate. The protein operates within nucleotide-sugar biosynthesis; UDP-N-acetyl-alpha-D-glucosamine biosynthesis; N-acetyl-alpha-D-glucosamine 1-phosphate from alpha-D-glucosamine 6-phosphate (route II): step 2/2. It participates in nucleotide-sugar biosynthesis; UDP-N-acetyl-alpha-D-glucosamine biosynthesis; UDP-N-acetyl-alpha-D-glucosamine from N-acetyl-alpha-D-glucosamine 1-phosphate: step 1/1. Its pathway is bacterial outer membrane biogenesis; LPS lipid A biosynthesis. In terms of biological role, catalyzes the last two sequential reactions in the de novo biosynthetic pathway for UDP-N-acetylglucosamine (UDP-GlcNAc). The C-terminal domain catalyzes the transfer of acetyl group from acetyl coenzyme A to glucosamine-1-phosphate (GlcN-1-P) to produce N-acetylglucosamine-1-phosphate (GlcNAc-1-P), which is converted into UDP-GlcNAc by the transfer of uridine 5-monophosphate (from uridine 5-triphosphate), a reaction catalyzed by the N-terminal domain. The polypeptide is Bifunctional protein GlmU (Bacillus cereus (strain AH187)).